Consider the following 94-residue polypeptide: Small ribosomal subunit protein eS24 (94 aa).

This sequence belongs to the eukaryotic ribosomal protein eS24 family.

The polypeptide is Small ribosomal subunit protein eS24 (Nanoarchaeum equitans (strain Kin4-M)).